The sequence spans 86 residues: Small ribosomal subunit protein bS20 (86 aa).

The tract at residues M1 to R25 is disordered. A compositionally biased stretch (basic residues) spans S7 to R25.

Belongs to the bacterial ribosomal protein bS20 family.

Its function is as follows. Binds directly to 16S ribosomal RNA. This Vesicomyosocius okutanii subsp. Calyptogena okutanii (strain HA) protein is Small ribosomal subunit protein bS20.